The following is a 197-amino-acid chain: Dehydrin DHN1 (197 aa).

A compositionally biased stretch (polar residues) spans 1-14 (MSQYQNQYGAQTGM). 2 disordered regions span residues 1–86 (MSQY…GTNP) and 133–197 (GTEQ…CTGH). A run of 2 repeats spans residues 16–21 (DEYGNP) and 26–31 (DQYGNP). The segment at 16-31 (DEYGNPVNQVDQYGNP) is 2 X approximate repeats. The segment covering 74-83 (THTGGVGGYG) has biased composition (gly residues). The stretch at 126-133 (KIKEKIPG) is one 2-1 repeat. The tract at residues 126–190 (KIKEKIPGTE…MDKIKEKLPG (65 aa)) is 2 X approximate repeats. Over residues 144-160 (AGYGSTGYGASGGGIGN) the composition is skewed to gly residues. Residues 165–188 (YVREEHRVDHGEKKGIMDKIKEKL) are compositionally biased toward basic and acidic residues. The stretch at 183–190 (KIKEKLPG) is one 2-2 repeat.

It belongs to the plant dehydrin family. As to expression, shoots, roots, and cotyledon from dehydrating seedlings.

The chain is Dehydrin DHN1 (DHN1) from Pisum sativum (Garden pea).